We begin with the raw amino-acid sequence, 601 residues long: 1-deoxy-D-xylulose-5-phosphate synthase (601 aa).

Residues His-63 and 104 to 106 (GHS) contribute to the thiamine diphosphate site. Asp-135 contacts Mg(2+). Thiamine diphosphate is bound by residues 136-137 (GS), Asn-164, Tyr-272, and Glu-353. Residue Asn-164 coordinates Mg(2+).

Belongs to the transketolase family. DXPS subfamily. In terms of assembly, homodimer. Requires Mg(2+) as cofactor. Thiamine diphosphate serves as cofactor.

The catalysed reaction is D-glyceraldehyde 3-phosphate + pyruvate + H(+) = 1-deoxy-D-xylulose 5-phosphate + CO2. It functions in the pathway metabolic intermediate biosynthesis; 1-deoxy-D-xylulose 5-phosphate biosynthesis; 1-deoxy-D-xylulose 5-phosphate from D-glyceraldehyde 3-phosphate and pyruvate: step 1/1. Functionally, catalyzes the acyloin condensation reaction between C atoms 2 and 3 of pyruvate and glyceraldehyde 3-phosphate to yield 1-deoxy-D-xylulose-5-phosphate (DXP). The polypeptide is 1-deoxy-D-xylulose-5-phosphate synthase (Aliarcobacter butzleri (strain RM4018) (Arcobacter butzleri)).